Here is a 393-residue protein sequence, read N- to C-terminus: Glucose-1-phosphate adenylyltransferase (393 aa).

Residues Tyr105, Gly170, 185–186 (EK), and Ser196 each bind alpha-D-glucose 1-phosphate.

The protein belongs to the bacterial/plant glucose-1-phosphate adenylyltransferase family. Homotetramer.

The catalysed reaction is alpha-D-glucose 1-phosphate + ATP + H(+) = ADP-alpha-D-glucose + diphosphate. The protein operates within glycan biosynthesis; glycogen biosynthesis. Functionally, involved in the biosynthesis of ADP-glucose, a building block required for the elongation reactions to produce glycogen. Catalyzes the reaction between ATP and alpha-D-glucose 1-phosphate (G1P) to produce pyrophosphate and ADP-Glc. The polypeptide is Glucose-1-phosphate adenylyltransferase (Clostridium perfringens (strain 13 / Type A)).